The primary structure comprises 199 residues: Protein-methionine-sulfoxide reductase heme-binding subunit MsrQ (199 aa).

4 helical membrane-spanning segments follow: residues 10–30 (WLKV…FWAI), 82–102 (LWCF…ELGI), 116–136 (PYLT…LTST), and 153–173 (VVYL…KILS).

It belongs to the MsrQ family. In terms of assembly, heterodimer of a catalytic subunit (MsrP) and a heme-binding subunit (MsrQ). Requires FMN as cofactor. The cofactor is heme b.

The protein localises to the cell inner membrane. Part of the MsrPQ system that repairs oxidized periplasmic proteins containing methionine sulfoxide residues (Met-O), using respiratory chain electrons. Thus protects these proteins from oxidative-stress damage caused by reactive species of oxygen and chlorine generated by the host defense mechanisms. MsrPQ is essential for the maintenance of envelope integrity under bleach stress, rescuing a wide series of structurally unrelated periplasmic proteins from methionine oxidation, including the primary periplasmic chaperone SurA and the lipoprotein Pal. MsrQ provides electrons for reduction to the reductase catalytic subunit MsrP, using the quinone pool of the respiratory chain. This is Protein-methionine-sulfoxide reductase heme-binding subunit MsrQ from Salmonella dublin (strain CT_02021853).